The chain runs to 184 residues: ATP synthase subunit delta (184 aa).

It belongs to the ATPase delta chain family. As to quaternary structure, F-type ATPases have 2 components, F(1) - the catalytic core - and F(0) - the membrane proton channel. F(1) has five subunits: alpha(3), beta(3), gamma(1), delta(1), epsilon(1). F(0) has three main subunits: a(1), b(2) and c(10-14). The alpha and beta chains form an alternating ring which encloses part of the gamma chain. F(1) is attached to F(0) by a central stalk formed by the gamma and epsilon chains, while a peripheral stalk is formed by the delta and b chains.

The protein localises to the cell inner membrane. Its function is as follows. F(1)F(0) ATP synthase produces ATP from ADP in the presence of a proton or sodium gradient. F-type ATPases consist of two structural domains, F(1) containing the extramembraneous catalytic core and F(0) containing the membrane proton channel, linked together by a central stalk and a peripheral stalk. During catalysis, ATP synthesis in the catalytic domain of F(1) is coupled via a rotary mechanism of the central stalk subunits to proton translocation. This protein is part of the stalk that links CF(0) to CF(1). It either transmits conformational changes from CF(0) to CF(1) or is implicated in proton conduction. This Paramagnetospirillum magneticum (strain ATCC 700264 / AMB-1) (Magnetospirillum magneticum) protein is ATP synthase subunit delta.